A 298-amino-acid polypeptide reads, in one-letter code: Leucine-rich repeat-containing protein 55 (298 aa).

Positions 1-34 (MGDTWAQLPWPGPPHSALLLVFFLLAAGVMHSDA) are cleaved as a signal peptide. The LRRNT domain maps to 35–65 (GASCPVLCTCRNQVVDCSNQRLFSVPPDLPM). 2 disulfide bridges follow: Cys-38–Cys-44 and Cys-42–Cys-51. 5 LRR repeats span residues 66–87 (DTRN…YLTC), 90–111 (ELRV…LFLH), 114–135 (RLAH…MFRE), 138–160 (GLVH…AFQG), and 163–186 (HLRD…EGLP). Residues 196–251 (NPWVCGCTMEPLLKWLRNRIQRCTADSQLAECRGPPEVEGAPLFSLTEESFKACHL) enclose the LRRCT domain. Intrachain disulfides connect Cys-200–Cys-227 and Cys-202–Cys-249. The helical transmembrane segment at 259–279 (LFIAFVGFVVSIASVATNFLL) threads the bilayer.

Interacts with KCNMA1.

It localises to the cell membrane. Its function is as follows. Auxiliary protein of the large-conductance, voltage and calcium-activated potassium channel (BK alpha). Modulates gating properties by producing a marked shift in the BK channel's voltage dependence of activation in the hyperpolarizing direction, and in the absence of calcium. The protein is Leucine-rich repeat-containing protein 55 (Lrrc55) of Rattus norvegicus (Rat).